Here is a 311-residue protein sequence, read N- to C-terminus: tRNA (cytosine(49)-C(5))-methyltransferase (311 aa).

Residues 118–124 (AAAPGSK), Asp-142, Asp-169, and Asp-186 each bind S-adenosyl-L-methionine. Cys-239 (nucleophile) is an active-site residue.

This sequence belongs to the class I-like SAM-binding methyltransferase superfamily. RsmB/NOP family. In terms of assembly, forms a tripartite complex with archease and tRNA. Binds only the oligomeric forms of the archease.

The protein resides in the cytoplasm. It catalyses the reaction cytidine(49) in tRNA precursor + S-adenosyl-L-methionine = 5-methylcytidine(49) in tRNA precursor + S-adenosyl-L-homocysteine + H(+). Its activity is regulated as follows. Substrate specificity and tendency to aggregate are influenced by archease. Its function is as follows. Catalyzes AdoMet-dependent formation of m5C in tRNA. In the presence of protein archease, specifically methylates the cytosine at position 49 (m5C49) of tRNA. In the absence of archease, catalyzes the formation of m5C at many locations in tRNAs or rRNAs. The polypeptide is tRNA (cytosine(49)-C(5))-methyltransferase (Pyrococcus abyssi (strain GE5 / Orsay)).